Consider the following 104-residue polypeptide: Protein KleF (104 aa).

In Escherichia coli, this protein is Protein KleF (kleF).